The chain runs to 25 residues: Xenoposin precursor fragment R2 (25 aa).

In terms of tissue distribution, expressed by the skin glands.

It localises to the secreted. Functionally, antimicrobial peptide. The protein is Xenoposin precursor fragment R2 of Xenopus ruwenzoriensis (Uganda clawed frog).